A 455-amino-acid chain; its full sequence is UDP-N-acetylmuramate--L-alanine ligase (455 aa).

An ATP-binding site is contributed by glycine 109 to threonine 115.

It belongs to the MurCDEF family.

The protein localises to the cytoplasm. The enzyme catalyses UDP-N-acetyl-alpha-D-muramate + L-alanine + ATP = UDP-N-acetyl-alpha-D-muramoyl-L-alanine + ADP + phosphate + H(+). It participates in cell wall biogenesis; peptidoglycan biosynthesis. In terms of biological role, cell wall formation. This chain is UDP-N-acetylmuramate--L-alanine ligase, found in Caldicellulosiruptor saccharolyticus (strain ATCC 43494 / DSM 8903 / Tp8T 6331).